A 138-amino-acid polypeptide reads, in one-letter code: Large ribosomal subunit protein uL16c (138 aa).

It belongs to the universal ribosomal protein uL16 family. Part of the 50S ribosomal subunit.

The protein localises to the plastid. The protein resides in the chloroplast. The protein is Large ribosomal subunit protein uL16c of Tetradesmus obliquus (Green alga).